An 83-amino-acid chain; its full sequence is MSSGGLLLLLGPLTLWEVLTPVSSTDRPEFCELPEDSGPCKGLFHVFYYNSDQNQCLEFIYGGCYGNANNFKTIEECKRTCAA.

The signal sequence occupies residues 1–24 (MSSGGLLLLLGPLTLWEVLTPVSS). A BPTI/Kunitz inhibitor domain is found at 31-81 (CELPEDSGPCKGLFHVFYYNSDQNQCLEFIYGGCYGNANNFKTIEECKRTC). 3 disulfides stabilise this stretch: Cys31–Cys81, Cys40–Cys64, and Cys56–Cys77.

The protein belongs to the venom Kunitz-type family. Expressed by the venom gland.

Its subcellular location is the secreted. Its function is as follows. Serine protease inhibitor. This Cryptophis nigrescens (Eastern small-eyed snake) protein is Kunitz-type serine protease inhibitor nigrescinin-5.